Consider the following 410-residue polypeptide: Cysteine desulfurase IscS (410 aa).

Pyridoxal 5'-phosphate is bound by residues 79–80 (AT), Asn-159, Gln-187, and 207–209 (SGH). Lys-210 is subject to N6-(pyridoxal phosphate)lysine. Thr-248 is a pyridoxal 5'-phosphate binding site. Cys-334 acts as the Cysteine persulfide intermediate in catalysis. Cys-334 contacts [2Fe-2S] cluster.

Belongs to the class-V pyridoxal-phosphate-dependent aminotransferase family. NifS/IscS subfamily. In terms of assembly, homodimer. Forms a heterotetramer with IscU, interacts with other sulfur acceptors. It depends on pyridoxal 5'-phosphate as a cofactor.

The protein resides in the cytoplasm. The catalysed reaction is (sulfur carrier)-H + L-cysteine = (sulfur carrier)-SH + L-alanine. Its pathway is cofactor biosynthesis; iron-sulfur cluster biosynthesis. In terms of biological role, master enzyme that delivers sulfur to a number of partners involved in Fe-S cluster assembly, tRNA modification or cofactor biosynthesis. Catalyzes the removal of elemental sulfur atoms from cysteine to produce alanine. Functions as a sulfur delivery protein for Fe-S cluster synthesis onto IscU, an Fe-S scaffold assembly protein, as well as other S acceptor proteins. The sequence is that of Cysteine desulfurase IscS from Ehrlichia chaffeensis (strain ATCC CRL-10679 / Arkansas).